The following is a 444-amino-acid chain: Phosphoglucosamine mutase (444 aa).

Catalysis depends on S104, which acts as the Phosphoserine intermediate. Mg(2+) is bound by residues S104, D243, D245, and D247. Position 104 is a phosphoserine (S104).

The protein belongs to the phosphohexose mutase family. Mg(2+) is required as a cofactor. Activated by phosphorylation.

The catalysed reaction is alpha-D-glucosamine 1-phosphate = D-glucosamine 6-phosphate. Catalyzes the conversion of glucosamine-6-phosphate to glucosamine-1-phosphate. The protein is Phosphoglucosamine mutase of Neisseria meningitidis serogroup B (strain ATCC BAA-335 / MC58).